The primary structure comprises 255 residues: Hemin import ATP-binding protein HmuV (255 aa).

One can recognise an ABC transporter domain in the interval 2–238 (LRVENLSIRR…EPLRAVFGLE (237 aa)). Residue 34 to 41 (GPNGAGKS) coordinates ATP.

This sequence belongs to the ABC transporter superfamily. Heme (hemin) importer (TC 3.A.1.14.5) family. As to quaternary structure, the complex is composed of two ATP-binding proteins (HmuV), two transmembrane proteins (HmuU) and a solute-binding protein (HmuT).

It localises to the cell inner membrane. Part of the ABC transporter complex HmuTUV involved in hemin import. Responsible for energy coupling to the transport system. This chain is Hemin import ATP-binding protein HmuV, found in Pseudomonas aeruginosa (strain ATCC 15692 / DSM 22644 / CIP 104116 / JCM 14847 / LMG 12228 / 1C / PRS 101 / PAO1).